Reading from the N-terminus, the 97-residue chain is Citrate lyase acyl carrier protein (97 aa).

At Ser-14 the chain carries O-(phosphoribosyl dephospho-coenzyme A)serine.

The protein belongs to the CitD family. In terms of assembly, oligomer with a subunit composition of (alpha,beta,gamma)6.

The protein resides in the cytoplasm. Its function is as follows. Covalent carrier of the coenzyme of citrate lyase. This chain is Citrate lyase acyl carrier protein, found in Lactobacillus acidophilus (strain ATCC 700396 / NCK56 / N2 / NCFM).